The following is a 157-amino-acid chain: Phosphopantetheine adenylyltransferase (157 aa).

T10 lines the substrate pocket. ATP is bound by residues 10-11 (TF) and H18. Substrate-binding residues include K42, L74, and R88. Residues 89 to 91 (GLR), E99, and 124 to 130 (NAFISSS) contribute to the ATP site.

It belongs to the bacterial CoaD family. In terms of assembly, homohexamer. Mg(2+) serves as cofactor.

The protein localises to the cytoplasm. It catalyses the reaction (R)-4'-phosphopantetheine + ATP + H(+) = 3'-dephospho-CoA + diphosphate. It participates in cofactor biosynthesis; coenzyme A biosynthesis; CoA from (R)-pantothenate: step 4/5. Functionally, reversibly transfers an adenylyl group from ATP to 4'-phosphopantetheine, yielding dephospho-CoA (dPCoA) and pyrophosphate. This is Phosphopantetheine adenylyltransferase from Helicobacter pylori (strain P12).